The sequence spans 67 residues: Surface composition regulator (67 aa).

The protein belongs to the GlgS family.

Its function is as follows. Major determinant of cell surface composition. Negatively regulates motility, adhesion and synthesis of biofilm exopolysaccharides. This Salmonella paratyphi A (strain ATCC 9150 / SARB42) protein is Surface composition regulator.